Reading from the N-terminus, the 741-residue chain is Zinc finger and BTB domain-containing protein 20 (741 aa).

Residues 1–17 show a composition bias toward basic and acidic residues; the sequence is MLERKKPKTAENQKASE. The tract at residues 1–28 is disordered; the sequence is MLERKKPKTAENQKASEENEITQPGGSS. One can recognise a BTB domain in the interval 104–167; that stretch reads CDVTVRIHGS…MYSGVLRVSQ (64 aa). The disordered stretch occupies residues 203 to 235; sequence GIQDSGQDTPRGTPESGTSGQSSDTESGYLQSH. The segment covering 206–235 has biased composition (polar residues); that stretch reads DSGQDTPRGTPESGTSGQSSDTESGYLQSH. Thr211 is subject to Phosphothreonine. Lys330 participates in a covalent cross-link: Glycyl lysine isopeptide (Lys-Gly) (interchain with G-Cter in SUMO1); alternate. Residue Lys330 forms a Glycyl lysine isopeptide (Lys-Gly) (interchain with G-Cter in SUMO2); alternate linkage. The interval 350–440 is disordered; that stretch reads RNESEECTED…SSPERSNESE (91 aa). Residue Ser353 is modified to Phosphoserine. Over residues 354–367 the composition is skewed to acidic residues; that stretch reads EECTEDTDQAEGTE. Thr357 is subject to Phosphothreonine. A Glycyl lysine isopeptide (Lys-Gly) (interchain with G-Cter in SUMO2) cross-link involves residue Lys371. Over residues 404–423 the composition is skewed to low complexity; sequence AEPAQPEQAAEAPAESSAQP. 4 C2H2-type zinc fingers span residues 578-600, 606-628, 634-656, and 662-684; these read YECT…MFVH, HQCS…MVTH, YQCS…MRLH, and YECY…VALH. A phosphothreonine mark is found at Thr690 and Thr695. A C2H2-type 5 zinc finger spans residues 715 to 737; it reads YVCSVCPAKFDQIEQFNDHMRMH. A Glycyl lysine isopeptide (Lys-Gly) (interchain with G-Cter in SUMO2) cross-link involves residue Lys723.

Can homodimerize. Binds to DNA. In terms of processing, sumoylated with SUMO1. As to expression, specifically expressed in early hippocampal neurons, cerebellar granule cells and gliogenic progenitors as well as in differentiated glia. Expressed in adult and aged myogenic satellite cells.

The protein resides in the nucleus. Its function is as follows. May be a transcription factor that may be involved in hematopoiesis, oncogenesis, and immune responses. Plays a role in postnatal myogenesis, may be involved in the regulation of satellite cells self-renewal. The polypeptide is Zinc finger and BTB domain-containing protein 20 (Zbtb20) (Mus musculus (Mouse)).